The following is a 194-amino-acid chain: Oligoribonuclease (194 aa).

An Exonuclease domain is found at 11–174 (LIWIDLEMTG…SDVRDSINEL (164 aa)). Tyr132 is a catalytic residue.

Belongs to the oligoribonuclease family.

It localises to the cytoplasm. Functionally, 3'-to-5' exoribonuclease specific for small oligoribonucleotides. This Xanthomonas oryzae pv. oryzae (strain MAFF 311018) protein is Oligoribonuclease.